The following is a 450-amino-acid chain: Phosphoglucosamine mutase (450 aa).

S102 functions as the Phosphoserine intermediate in the catalytic mechanism. Mg(2+) contacts are provided by S102, D243, D245, and D247. A Phosphoserine modification is found at S102.

The protein belongs to the phosphohexose mutase family. The cofactor is Mg(2+). Post-translationally, activated by phosphorylation.

The enzyme catalyses alpha-D-glucosamine 1-phosphate = D-glucosamine 6-phosphate. Catalyzes the conversion of glucosamine-6-phosphate to glucosamine-1-phosphate. The chain is Phosphoglucosamine mutase from Rhizobium johnstonii (strain DSM 114642 / LMG 32736 / 3841) (Rhizobium leguminosarum bv. viciae).